The primary structure comprises 222 residues: Orotate phosphoribosyltransferase (222 aa).

Residue lysine 29 coordinates 5-phospho-alpha-D-ribose 1-diphosphate. 37–38 provides a ligand contact to orotate; the sequence is FF. 5-phospho-alpha-D-ribose 1-diphosphate is bound by residues 75–76, arginine 101, lysine 102, lysine 105, histidine 107, and 126–134; these read YK and DDVISAGTS. 2 residues coordinate orotate: serine 130 and arginine 158.

The protein belongs to the purine/pyrimidine phosphoribosyltransferase family. PyrE subfamily. As to quaternary structure, homodimer. Requires Mg(2+) as cofactor.

It carries out the reaction orotidine 5'-phosphate + diphosphate = orotate + 5-phospho-alpha-D-ribose 1-diphosphate. The protein operates within pyrimidine metabolism; UMP biosynthesis via de novo pathway; UMP from orotate: step 1/2. Functionally, catalyzes the transfer of a ribosyl phosphate group from 5-phosphoribose 1-diphosphate to orotate, leading to the formation of orotidine monophosphate (OMP). The sequence is that of Orotate phosphoribosyltransferase from Polynucleobacter asymbioticus (strain DSM 18221 / CIP 109841 / QLW-P1DMWA-1) (Polynucleobacter necessarius subsp. asymbioticus).